A 353-amino-acid chain; its full sequence is D-alanine--D-alanine ligase (353 aa).

One can recognise an ATP-grasp domain in the interval 141-349 (KAALAGAGLA…LEQLVHELLE (209 aa)). 176 to 231 (ESGLCYPCFIKPANLGSSVGISKARNREELIHGLRLAATLDPRLVVEQGVQARELE) is an ATP binding site. Residues aspartate 302, glutamate 316, and asparagine 318 each contribute to the Mg(2+) site.

Belongs to the D-alanine--D-alanine ligase family. Mg(2+) serves as cofactor. The cofactor is Mn(2+).

Its subcellular location is the cytoplasm. It catalyses the reaction 2 D-alanine + ATP = D-alanyl-D-alanine + ADP + phosphate + H(+). It participates in cell wall biogenesis; peptidoglycan biosynthesis. Functionally, cell wall formation. The polypeptide is D-alanine--D-alanine ligase (Parasynechococcus marenigrum (strain WH8102)).